We begin with the raw amino-acid sequence, 338 residues long: MTKQTIAILGPGSWGTALGQVLNDNGHTVRIWGNVPEQIDEINKEHTNKRYFKDVILDENIKGYKDLSEALDGVDAVLFVVPTKVTRLVAKQVAQALKHKVVVMHASKGLEPDSHKRLSEVLEEEIPAELRSEIVVVSGPSHAEETIVRDLTLISAASKDLETASYVQNLFSNHYFRLYTNNDVIGVETAGALKNIIAVGAGALHGLGYGDNAKAAIIARGLTEITRLGVAMGANPLTYSGLSGVGDLIVTGTSVHSRNWRAGDQLGRGEKLEDVERNMGMVIEGISTTKAAYELAQELGVYMPITQAIYKVIYQGAGIEDAIKEIMTGEFRHENEWH.

Residues Ser-13, Trp-14, and Lys-108 each coordinate NADPH. Sn-glycerol 3-phosphate contacts are provided by Lys-108, Gly-139, and Ser-141. Ala-143 lines the NADPH pocket. Sn-glycerol 3-phosphate is bound by residues Lys-194, Asp-247, Ser-257, Arg-258, and Asn-259. Catalysis depends on Lys-194, which acts as the Proton acceptor. Arg-258 is a binding site for NADPH. Residues Val-282 and Glu-284 each coordinate NADPH.

The protein belongs to the NAD-dependent glycerol-3-phosphate dehydrogenase family.

Its subcellular location is the cytoplasm. It carries out the reaction sn-glycerol 3-phosphate + NAD(+) = dihydroxyacetone phosphate + NADH + H(+). The enzyme catalyses sn-glycerol 3-phosphate + NADP(+) = dihydroxyacetone phosphate + NADPH + H(+). Its pathway is membrane lipid metabolism; glycerophospholipid metabolism. Its function is as follows. Catalyzes the reduction of the glycolytic intermediate dihydroxyacetone phosphate (DHAP) to sn-glycerol 3-phosphate (G3P), the key precursor for phospholipid synthesis. The chain is Glycerol-3-phosphate dehydrogenase [NAD(P)+] from Streptococcus suis (strain 98HAH33).